A 511-amino-acid polypeptide reads, in one-letter code: Aldehyde dehydrogenase 2, mitochondrial (511 aa).

The transit peptide at 1–21 directs the protein to the mitochondrion; the sequence is MSKSKTKTDKRNQSSLSRIKL. The segment at 72 to 92 is disordered; sequence VSEKSQHDSTEEDITQVSEKS. 274–279 serves as a coordination point for NAD(+); sequence GSTLVG. Residue Glu297 is the Proton acceptor of the active site. The active-site Nucleophile is the Cys331.

It belongs to the aldehyde dehydrogenase family.

The protein localises to the mitochondrion matrix. The enzyme catalyses an aldehyde + NAD(+) + H2O = a carboxylate + NADH + 2 H(+). The protein operates within alcohol metabolism; ethanol degradation; acetate from ethanol: step 2/2. The sequence is that of Aldehyde dehydrogenase 2, mitochondrial (ALD2) from Saccharomyces cerevisiae (Baker's yeast).